A 290-amino-acid chain; its full sequence is Fructose-1,6-bisphosphatase class 1 (290 aa).

Mg(2+)-binding residues include Glu-78, Asp-96, Leu-98, and Asp-99. Substrate contacts are provided by residues 99-102 (DGSS), Tyr-201, and Lys-226. Glu-232 contributes to the Mg(2+) binding site.

Belongs to the FBPase class 1 family. As to quaternary structure, homotetramer. Mg(2+) is required as a cofactor.

Its subcellular location is the cytoplasm. It catalyses the reaction beta-D-fructose 1,6-bisphosphate + H2O = beta-D-fructose 6-phosphate + phosphate. It functions in the pathway carbohydrate biosynthesis; gluconeogenesis. This Helicobacter pylori (strain J99 / ATCC 700824) (Campylobacter pylori J99) protein is Fructose-1,6-bisphosphatase class 1.